The primary structure comprises 299 residues: ATP phosphoribosyltransferase (299 aa).

This sequence belongs to the ATP phosphoribosyltransferase family. Long subfamily. Equilibrium between an active dimeric form, an inactive hexameric form and higher aggregates. Interconversion between the various forms is largely reversible and is influenced by the natural substrates and inhibitors of the enzyme. Requires Mg(2+) as cofactor.

The protein resides in the cytoplasm. It catalyses the reaction 1-(5-phospho-beta-D-ribosyl)-ATP + diphosphate = 5-phospho-alpha-D-ribose 1-diphosphate + ATP. The protein operates within amino-acid biosynthesis; L-histidine biosynthesis; L-histidine from 5-phospho-alpha-D-ribose 1-diphosphate: step 1/9. Its activity is regulated as follows. Feedback inhibited by histidine. In terms of biological role, catalyzes the condensation of ATP and 5-phosphoribose 1-diphosphate to form N'-(5'-phosphoribosyl)-ATP (PR-ATP). Has a crucial role in the pathway because the rate of histidine biosynthesis seems to be controlled primarily by regulation of HisG enzymatic activity. The protein is ATP phosphoribosyltransferase of Escherichia fergusonii (strain ATCC 35469 / DSM 13698 / CCUG 18766 / IAM 14443 / JCM 21226 / LMG 7866 / NBRC 102419 / NCTC 12128 / CDC 0568-73).